The sequence spans 180 residues: Inner membrane-spanning protein YciB (180 aa).

The next 5 membrane-spanning stretches (helical) occupy residues isoleucine 22–phenylalanine 42, methionine 50–serine 70, leucine 72–serine 92, methionine 121–leucine 141, and phenylalanine 149–isoleucine 169.

Belongs to the YciB family.

The protein localises to the cell inner membrane. Its function is as follows. Plays a role in cell envelope biogenesis, maintenance of cell envelope integrity and membrane homeostasis. The polypeptide is Inner membrane-spanning protein YciB (Yersinia enterocolitica serotype O:8 / biotype 1B (strain NCTC 13174 / 8081)).